The sequence spans 133 residues: uncharacterized protein (133 aa).

The interval T107 to V133 is disordered.

This is an uncharacterized protein from Homo sapiens (Human).